The chain runs to 348 residues: GMP reductase 2 (348 aa).

NADP(+)-binding positions include serine 26–arginine 27, lysine 78, aspartate 129–alanine 131, and isoleucine 180–glycine 181. K(+)-binding residues include glycine 181, glycine 183, and cysteine 186. Residue cysteine 186 is the Thioimidate intermediate of the active site. Threonine 188 (proton donor/acceptor) is an active-site residue. A K(+)-binding site is contributed by arginine 189. GMP-binding positions include aspartate 219–glycine 221, glycine 242–glycine 243, glycine 268–serine 270, and arginine 286–glycine 290. NADP(+) is bound by residues methionine 269 and tyrosine 285–arginine 286. Position 291 is an N6-acetyllysine (lysine 291). Serine 314–threonine 317 is a binding site for NADP(+).

This sequence belongs to the IMPDH/GMPR family. GuaC type 1 subfamily. In terms of assembly, homotetramer.

It catalyses the reaction IMP + NH4(+) + NADP(+) = GMP + NADPH + 2 H(+). Functionally, catalyzes the irreversible NADPH-dependent deamination of GMP to IMP. It functions in the conversion of nucleobase, nucleoside and nucleotide derivatives of G to A nucleotides, and in maintaining the intracellular balance of A and G nucleotides. Plays a role in modulating cellular differentiation. In Mus musculus (Mouse), this protein is GMP reductase 2.